Here is a 298-residue protein sequence, read N- to C-terminus: UDP-N-acetylenolpyruvoylglucosamine reductase (298 aa).

One can recognise an FAD-binding PCMH-type domain in the interval 26 to 191; the sequence is KTGGEAEYLA…LSATFSLKPG (166 aa). Arg-170 is a catalytic residue. Ser-220 (proton donor) is an active-site residue. Glu-290 is a catalytic residue.

The protein belongs to the MurB family. FAD serves as cofactor.

It is found in the cytoplasm. The enzyme catalyses UDP-N-acetyl-alpha-D-muramate + NADP(+) = UDP-N-acetyl-3-O-(1-carboxyvinyl)-alpha-D-glucosamine + NADPH + H(+). It participates in cell wall biogenesis; peptidoglycan biosynthesis. In terms of biological role, cell wall formation. This chain is UDP-N-acetylenolpyruvoylglucosamine reductase, found in Lactobacillus acidophilus (strain ATCC 700396 / NCK56 / N2 / NCFM).